A 2225-amino-acid chain; its full sequence is Multifunctional protein CAD (2225 aa).

N-acetylalanine is present on Ala2. Residues 2–365 (AALVLEDGSV…TVREAVAGNP (364 aa)) are GATase (Glutamine amidotransferase). 3 residues coordinate L-glutamine: Ser44, Gly222, and Gly224. A Glutamine amidotransferase type-1 domain is found at 177-363 (RICALDCGLK…LETVREAVAG (187 aa)). Cys252 acts as the Nucleophile; for GATase activity in catalysis. L-glutamine contacts are provided by Leu253, Gln256, Asn294, Gly296, and Phe297. Active-site for GATase activity residues include His336 and Glu338. Residues 366–394 (GGQTVKERLVQRLCPPGLLIPGSGLPPPR) form a linker region. The tract at residues 395–933 (KVLILGSGGL…NTHDLDFRTP (539 aa)) is CPSase A. A CPSase (Carbamoyl phosphate synthase) region spans residues 395–1455 (KVLILGSGGL…APPLKVHVDC (1061 aa)). The residue at position 456 (Thr456) is a Phosphothreonine; by MAPK1. ATP-binding residues include Arg515, Arg555, Gly561, Gly562, Lys592, Glu599, Gly625, Ile626, His627, Gln668, and Glu682. The 193-residue stretch at 519 to 711 (AARMAEIGEH…LAYVAAKLAL (193 aa)) folds into the ATP-grasp 1 domain. Residues Gln668, Glu682, and Asn684 each coordinate Mg(2+). Residues Gln668, Glu682, and Asn684 each contribute to the Mn(2+) site. Residue Lys747 is modified to N6-acetyllysine. A CPSase B region spans residues 934–1455 (HVLVLGSGVY…APPLKVHVDC (522 aa)). Ser1038 is subject to Phosphoserine. The ATP-grasp 2 domain occupies 1052–1243 (SRLLDTIGIS…LVALATRIIM (192 aa)). The ATP site is built by Arg1088, Lys1127, Ile1129, Glu1134, Gly1159, Val1160, His1161, Ser1162, Gln1202, and Glu1214. 3 residues coordinate Mg(2+): Gln1202, Glu1214, and Asn1216. Residues Gln1202, Glu1214, and Asn1216 each coordinate Mn(2+). An MGS-like domain is found at 1308–1462 (FKIPKKNILL…VDCMTSQKLV (155 aa)). Ser1406 is modified (phosphoserine; by PKA). Lys1411 bears the N6-acetyllysine mark. Positions 1456-1788 (MTSQKLVRLP…VKGTIRRVVL (333 aa)) are DHOase (dihydroorotase). 2 residues coordinate Zn(2+): His1471 and His1473. (S)-dihydroorotate contacts are provided by Arg1475 and Asn1505. Residues Lys1556, His1590, Cys1613, His1614, and Glu1637 each coordinate Zn(2+). At Lys1556 the chain carries N6-carboxylysine. Position 1661 (Arg1661) interacts with (S)-dihydroorotate. Residue Asp1686 coordinates Zn(2+). Asp1686 serves as the catalytic For DHOase activity. (S)-dihydroorotate is bound by residues His1690 and Pro1702. A linker region spans residues 1789–1917 (RGEVAYIDGQ…GLLHPQTSPL (129 aa)). Residues 1813-1911 (PQGAVPQPPP…QNLGSSGLLH (99 aa)) form a disordered region. Residues 1825–1834 (PATTEITTTP) show a composition bias toward low complexity. Phosphoserine; by RPS6KB1 and PKA is present on Ser1859. The segment covering 1866–1878 (EEPKEKPSRKVVE) has biased composition (basic and acidic residues). The residue at position 1873 (Ser1873) is a Phosphoserine; by PKC; in vitro. Thr1884 carries the post-translational modification Phosphothreonine. The span at 1899–1911 (ASPQNLGSSGLLH) shows a compositional bias: polar residues. Phosphoserine occurs at positions 1900 and 1938. An ATCase (Aspartate transcarbamylase) region spans residues 1918-2225 (LHSLVGQHIL…ALLATVLGRF (308 aa)). 2 residues coordinate carbamoyl phosphate: Arg1975 and Thr1976. Lys2003 provides a ligand contact to L-aspartate. The carbamoyl phosphate site is built by Arg2024, His2052, and Gln2055. Residues Arg2085 and Arg2146 each coordinate L-aspartate. The carbamoyl phosphate site is built by Met2185 and Pro2186.

It in the N-terminal section; belongs to the CarA family. In the 2nd section; belongs to the CarB family. This sequence in the 3rd section; belongs to the metallo-dependent hydrolases superfamily. DHOase family. CAD subfamily. The protein in the C-terminal section; belongs to the aspartate/ornithine carbamoyltransferase superfamily. ATCase family. As to quaternary structure, homohexamer. Interacts with CIPC. The cofactor is Zn(2+). Requires Mg(2+) as cofactor. Mn(2+) serves as cofactor. Post-translationally, activated by MAP kinase (Erk1/2) phosphorylation just prior to the S phase of the cell cycle, when the demand for pyrimidine nucleotides is greatest, and down-regulated as the cells emerge from S phase by protein kinase A (PKA) phosphorylation. Phosphorylation at Ser-1859 by RPS6KB1 downstream of MTOR promotes oligomerization and stimulates dihydroorotase activity. Phosphorylation at Ser-1406 reduces sensitivity to feedback inhibition by UTP.

Its subcellular location is the cytoplasm. The protein resides in the nucleus. The enzyme catalyses hydrogencarbonate + L-glutamine + 2 ATP + H2O = carbamoyl phosphate + L-glutamate + 2 ADP + phosphate + 2 H(+). It catalyses the reaction L-glutamine + H2O = L-glutamate + NH4(+). The catalysed reaction is hydrogencarbonate + NH4(+) + 2 ATP = carbamoyl phosphate + 2 ADP + phosphate + 2 H(+). It carries out the reaction carbamoyl phosphate + L-aspartate = N-carbamoyl-L-aspartate + phosphate + H(+). The enzyme catalyses (S)-dihydroorotate + H2O = N-carbamoyl-L-aspartate + H(+). The protein operates within pyrimidine metabolism; UMP biosynthesis via de novo pathway; (S)-dihydroorotate from bicarbonate: step 1/3. It functions in the pathway pyrimidine metabolism; UMP biosynthesis via de novo pathway; (S)-dihydroorotate from bicarbonate: step 2/3. It participates in pyrimidine metabolism; UMP biosynthesis via de novo pathway; (S)-dihydroorotate from bicarbonate: step 3/3. Allosterically regulated and controlled by phosphorylation. 5-phosphoribose 1-diphosphate (PRPP) is an activator while UMP and UTP are inhibitors of the CPSase reaction. Multifunctional protein that encodes the first 3 enzymatic activities of the de novo pyrimidine pathway: carbamoylphosphate synthetase (CPSase; EC 6.3.5.5), aspartate transcarbamylase (ATCase; EC 2.1.3.2) and dihydroorotase (DHOase; EC 3.5.2.3). The CPSase-function is accomplished in 2 steps, by a glutamine-dependent amidotransferase activity (GATase) that binds and cleaves glutamine to produce ammonia, followed by an ammonium-dependent carbamoyl phosphate synthetase, which reacts with the ammonia, hydrogencarbonate and ATP to form carbamoyl phosphate. The endogenously produced carbamoyl phosphate is sequestered and channeled to the ATCase active site. ATCase then catalyzes the formation of carbamoyl-L-aspartate from L-aspartate and carbamoyl phosphate. In the last step, DHOase catalyzes the cyclization of carbamoyl aspartate to dihydroorotate. The chain is Multifunctional protein CAD (CAD) from Mesocricetus auratus (Golden hamster).